A 424-amino-acid chain; its full sequence is Histone-binding protein RBBP7 (424 aa).

7 WD repeats span residues 47–121 (QWLP…KINH), 127–172 (RARY…LRLR), 180–216 (GLSW…KIVD), 227–268 (VVED…HSVD), 274–311 (VNCL…LHSF), 317–368 (EIFQ…LFIH), and 375–402 (ISDF…IWQM). The interaction with HAT1 stretch occupies residues 359 to 404 (DGPPELLFIHGGHTAKISDFSWNPNEPWVICSVSEDNIMQIWQMAE).

The protein belongs to the WD repeat RBAP46/RBAP48/MSI1 family. Binds directly to helix 1 of the histone fold of histone H4, a region that is not accessible when H4 is in chromatin. Also interacts with histone H2B and HAT1.

It is found in the nucleus. Core histone-binding subunit that may target chromatin remodeling factors, histone acetyltransferases and histone deacetylases to their histone substrates in a manner that is regulated by nucleosomal DNA. Component of several complexes which regulate chromatin metabolism. The protein is Histone-binding protein RBBP7 (RBBP7) of Gallus gallus (Chicken).